A 272-amino-acid polypeptide reads, in one-letter code: PILR alpha-associated neural protein (272 aa).

An N-terminal signal peptide occupies residues 1–27; it reads MWPAQLLSQLLPLWPLLLLPLSLPAQG. The interval 25-93 is disordered; sequence AQGSSHRSPP…PSGFEEGPPS (69 aa). Residues 28-174 lie on the Extracellular side of the membrane; the sequence is SSHRSPPAPA…FGGRGEGVDP (147 aa). Thr-136 carries an O-linked (GalNAc...) threonine glycan. Residues 175 to 195 traverse the membrane as a helical segment; it reads QLYVTITISIIIVLVATGIIF. Over 196 to 272 the chain is Cytoplasmic; the sequence is KFCWDRSQKR…KGAPAFQLNR (77 aa). The interval 205–272 is disordered; that stretch reads RRRPSGQQGA…KGAPAFQLNR (68 aa). Residues 209-225 are compositionally biased toward polar residues; sequence SGQQGALRQEESQQPLT.

In terms of processing, O-glycosylation at Thr-136 is essential for recognition by PILRA.

Its subcellular location is the membrane. Functionally, acts as a ligand for PILRA in neuronal tissues, where it may be involved in immune regulation. This Rattus norvegicus (Rat) protein is PILR alpha-associated neural protein (Pianp).